The primary structure comprises 208 residues: Thymidylate kinase (208 aa).

13–20 (GLEGAGKS) serves as a coordination point for ATP.

The protein belongs to the thymidylate kinase family.

It carries out the reaction dTMP + ATP = dTDP + ADP. Phosphorylation of dTMP to form dTDP in both de novo and salvage pathways of dTTP synthesis. The chain is Thymidylate kinase from Shewanella amazonensis (strain ATCC BAA-1098 / SB2B).